Reading from the N-terminus, the 436-residue chain is 3-ketoacyl-CoA thiolase (436 aa).

The active-site Acyl-thioester intermediate is C99. Catalysis depends on proton acceptor residues H392 and C422.

This sequence belongs to the thiolase-like superfamily. Thiolase family. In terms of assembly, heterotetramer of two alpha chains (FadJ) and two beta chains (FadI).

Its subcellular location is the cytoplasm. The enzyme catalyses an acyl-CoA + acetyl-CoA = a 3-oxoacyl-CoA + CoA. It functions in the pathway lipid metabolism; fatty acid beta-oxidation. Catalyzes the final step of fatty acid oxidation in which acetyl-CoA is released and the CoA ester of a fatty acid two carbons shorter is formed. In Cronobacter sakazakii (strain ATCC BAA-894) (Enterobacter sakazakii), this protein is 3-ketoacyl-CoA thiolase.